Reading from the N-terminus, the 368-residue chain is tRNA/tmRNA (uracil-C(5))-methyltransferase (368 aa).

The S-adenosyl-L-methionine site is built by Gln192, Tyr220, Asn225, Glu241, and Asp301. The active-site Nucleophile is the Cys326. Glu360 (proton acceptor) is an active-site residue.

This sequence belongs to the class I-like SAM-binding methyltransferase superfamily. RNA M5U methyltransferase family. TrmA subfamily.

It catalyses the reaction uridine(54) in tRNA + S-adenosyl-L-methionine = 5-methyluridine(54) in tRNA + S-adenosyl-L-homocysteine + H(+). The catalysed reaction is uridine(341) in tmRNA + S-adenosyl-L-methionine = 5-methyluridine(341) in tmRNA + S-adenosyl-L-homocysteine + H(+). Its function is as follows. Dual-specificity methyltransferase that catalyzes the formation of 5-methyluridine at position 54 (m5U54) in all tRNAs, and that of position 341 (m5U341) in tmRNA (transfer-mRNA). The protein is tRNA/tmRNA (uracil-C(5))-methyltransferase of Actinobacillus pleuropneumoniae serotype 3 (strain JL03).